A 438-amino-acid polypeptide reads, in one-letter code: Serine hydroxymethyltransferase (438 aa).

(6S)-5,6,7,8-tetrahydrofolate is bound by residues L119 and 123–125; that span reads GHL. At K228 the chain carries N6-(pyridoxal phosphate)lysine. A (6S)-5,6,7,8-tetrahydrofolate-binding site is contributed by 370-372; it reads SPF.

This sequence belongs to the SHMT family. Homodimer. Pyridoxal 5'-phosphate serves as cofactor.

The protein resides in the cytoplasm. It carries out the reaction (6R)-5,10-methylene-5,6,7,8-tetrahydrofolate + glycine + H2O = (6S)-5,6,7,8-tetrahydrofolate + L-serine. It participates in one-carbon metabolism; tetrahydrofolate interconversion. Its pathway is amino-acid biosynthesis; glycine biosynthesis; glycine from L-serine: step 1/1. In terms of biological role, catalyzes the reversible interconversion of serine and glycine with tetrahydrofolate (THF) serving as the one-carbon carrier. This reaction serves as the major source of one-carbon groups required for the biosynthesis of purines, thymidylate, methionine, and other important biomolecules. Also exhibits THF-independent aldolase activity toward beta-hydroxyamino acids, producing glycine and aldehydes, via a retro-aldol mechanism. The chain is Serine hydroxymethyltransferase from Pelodictyon phaeoclathratiforme (strain DSM 5477 / BU-1).